Here is a 155-residue protein sequence, read N- to C-terminus: uncharacterized protein (155 aa).

A mitochondrion-targeting transit peptide spans 1 to 17; the sequence is MMRGASKRSISSAAVLL. The disordered stretch occupies residues 111 to 155; that stretch reads WHRQQKRSQRRRSVAKYEQREEAARVEKEEREARDREMVRELFRR. Over residues 113-124 the composition is skewed to basic residues; sequence RQQKRSQRRRSV. A compositionally biased stretch (basic and acidic residues) spans 125–155; sequence AKYEQREEAARVEKEEREARDREMVRELFRR.

This sequence belongs to the prokaryotic/mitochondrial release factor family.

The protein localises to the mitochondrion. This is an uncharacterized protein from Saccharomyces cerevisiae (strain ATCC 204508 / S288c) (Baker's yeast).